Here is a 198-residue protein sequence, read N- to C-terminus: Transcription antitermination protein NusB (198 aa).

This sequence belongs to the NusB family.

Its function is as follows. Involved in transcription antitermination. Required for transcription of ribosomal RNA (rRNA) genes. Binds specifically to the boxA antiterminator sequence of the ribosomal RNA (rrn) operons. This is Transcription antitermination protein NusB from Methylococcus capsulatus (strain ATCC 33009 / NCIMB 11132 / Bath).